The chain runs to 492 residues: Serine incorporator 4 (492 aa).

Helical transmembrane passes span 58–78 (FYILLHMGASAICCLLLSKTV), 113–133 (AVYRVCAGTATFHLLQAVLLV), 148–168 (SFWSLKLLFLLGLCTAAFCIP), 179–199 (IGICGGFTFILLQLVLITAFA), 217–237 (FLGVLLATLGFYSMAGVGAVL), 254–274 (LLSLHLCFCGLLSLLSIAPCI), 281–301 (SGLLQASIISCYIMYLTFSAL), 330–350 (IPDASVAVFSASIMYACVLFA), 421–441 (GFHFAFFLASLYVMVTLTNWF), and 464–484 (VASCWACVLLYLGLLLAPLLA).

This sequence belongs to the TDE1 family.

Its subcellular location is the membrane. Its function is as follows. Incorporates a polar amino acid serine into membranes and facilitates the synthesis of two serine-derived lipids, phosphatidylserine and sphingolipids. This chain is Serine incorporator 4 (Serinc4), found in Rattus norvegicus (Rat).